We begin with the raw amino-acid sequence, 369 residues long: UDP-N-acetylglucosamine--N-acetylmuramyl-(pentapeptide) pyrophosphoryl-undecaprenol N-acetylglucosamine transferase (369 aa).

UDP-N-acetyl-alpha-D-glucosamine contacts are provided by residues 10 to 12 (TAG), N124, R166, S196, I251, and Q296.

This sequence belongs to the glycosyltransferase 28 family. MurG subfamily.

The protein resides in the cell membrane. The enzyme catalyses di-trans,octa-cis-undecaprenyl diphospho-N-acetyl-alpha-D-muramoyl-L-alanyl-D-glutamyl-meso-2,6-diaminopimeloyl-D-alanyl-D-alanine + UDP-N-acetyl-alpha-D-glucosamine = di-trans,octa-cis-undecaprenyl diphospho-[N-acetyl-alpha-D-glucosaminyl-(1-&gt;4)]-N-acetyl-alpha-D-muramoyl-L-alanyl-D-glutamyl-meso-2,6-diaminopimeloyl-D-alanyl-D-alanine + UDP + H(+). It participates in cell wall biogenesis; peptidoglycan biosynthesis. Cell wall formation. Catalyzes the transfer of a GlcNAc subunit on undecaprenyl-pyrophosphoryl-MurNAc-pentapeptide (lipid intermediate I) to form undecaprenyl-pyrophosphoryl-MurNAc-(pentapeptide)GlcNAc (lipid intermediate II). The polypeptide is UDP-N-acetylglucosamine--N-acetylmuramyl-(pentapeptide) pyrophosphoryl-undecaprenol N-acetylglucosamine transferase (Acetivibrio thermocellus (strain ATCC 27405 / DSM 1237 / JCM 9322 / NBRC 103400 / NCIMB 10682 / NRRL B-4536 / VPI 7372) (Clostridium thermocellum)).